Reading from the N-terminus, the 583-residue chain is Ribosomal lysine N-methyltransferase 1 (583 aa).

Positions 22 to 274 constitute an SET domain; that stretch reads EELKFLYTDL…QSRELSNNYG (253 aa). Y273 provides a ligand contact to S-adenosyl-L-methionine. 2 coiled-coil regions span residues 378 to 407 and 433 to 459; these read KAEE…KLNS and KGQK…ENKH.

The protein belongs to the class V-like SAM-binding methyltransferase superfamily. RKM1 family.

The protein localises to the cytoplasm. It is found in the nucleus. Functionally, S-adenosyl-L-methionine-dependent protein-lysine N-methyltransferase that monomethylates ribosomal protein S18 (RPS18A and RPS18B) at 'Lys-48' and dimethylates ribosomal protein L23 (RPL23A and RPL23B) at 'Lys-106' and 'Lys-110'. The sequence is that of Ribosomal lysine N-methyltransferase 1 from Saccharomyces cerevisiae (strain ATCC 204508 / S288c) (Baker's yeast).